The chain runs to 401 residues: Multidrug resistance protein MdtH (401 aa).

11 helical membrane passes run 13–33 (YFLLLDNLLVVLGFFIVFPLI), 34–54 (SIRFVDQLGWAAVLVGLALGL), 99–116 (PWILWLACALSGLGGTLF), 139–159 (LLMMQDSAGAVIGALIGSWLL), 165–185 (FVCWTGAVIFILAAGWNVWLL), 214–234 (VLTLTGYYMLSVQVMLMLPIV), 243–263 (AAVKWMYAIEAALSLTLLYPI), 277–297 (LMFGLLIMTLSLFPVGLITHL), 299–319 (TLFMFICFFYMGSIIAEPARE), 340–360 (LGLALGGALGYTGGGWMYDTG), and 368–388 (LPWFLLGVIGLITLVGLYWQF).

The protein belongs to the major facilitator superfamily. DHA1 family. MdtH (TC 2.A.1.2.21) subfamily.

It is found in the cell inner membrane. The polypeptide is Multidrug resistance protein MdtH (Yersinia enterocolitica serotype O:8 / biotype 1B (strain NCTC 13174 / 8081)).